The following is a 335-amino-acid chain: Glycerol-3-phosphate dehydrogenase [NAD(P)+] (335 aa).

3 residues coordinate NADPH: Ser12, Trp13, and Lys107. Lys107, Gly138, and Ser140 together coordinate sn-glycerol 3-phosphate. NADPH is bound at residue Ala142. Residues Lys193, Asp246, Ser256, Arg257, and Asn258 each contribute to the sn-glycerol 3-phosphate site. Lys193 acts as the Proton acceptor in catalysis. NADPH is bound at residue Arg257. Val281 and Glu283 together coordinate NADPH.

The protein belongs to the NAD-dependent glycerol-3-phosphate dehydrogenase family.

Its subcellular location is the cytoplasm. The enzyme catalyses sn-glycerol 3-phosphate + NAD(+) = dihydroxyacetone phosphate + NADH + H(+). It catalyses the reaction sn-glycerol 3-phosphate + NADP(+) = dihydroxyacetone phosphate + NADPH + H(+). It participates in membrane lipid metabolism; glycerophospholipid metabolism. In terms of biological role, catalyzes the reduction of the glycolytic intermediate dihydroxyacetone phosphate (DHAP) to sn-glycerol 3-phosphate (G3P), the key precursor for phospholipid synthesis. This Geobacter metallireducens (strain ATCC 53774 / DSM 7210 / GS-15) protein is Glycerol-3-phosphate dehydrogenase [NAD(P)+].